Here is a 138-residue protein sequence, read N- to C-terminus: Holo-[acyl-carrier-protein] synthase (138 aa).

Residues Asp-8 and Glu-57 each contribute to the Mg(2+) site.

The protein belongs to the P-Pant transferase superfamily. AcpS family. The cofactor is Mg(2+).

Its subcellular location is the cytoplasm. It catalyses the reaction apo-[ACP] + CoA = holo-[ACP] + adenosine 3',5'-bisphosphate + H(+). In terms of biological role, transfers the 4'-phosphopantetheine moiety from coenzyme A to a Ser of acyl-carrier-protein. The protein is Holo-[acyl-carrier-protein] synthase of Phenylobacterium zucineum (strain HLK1).